A 240-amino-acid polypeptide reads, in one-letter code: Short palate, lung and nasal epithelium carcinoma-associated protein 2B (240 aa).

The first 19 residues, 1–19 (MVQLWKLVLLCGLLAGTSA), serve as a signal peptide directing secretion. The cysteines at positions 163 and 206 are disulfide-linked.

The protein belongs to the BPI/LBP/Plunc superfamily. Plunc family. Parotid glands.

It is found in the secreted. This is Short palate, lung and nasal epithelium carcinoma-associated protein 2B (SPLUNC2B) from Bos taurus (Bovine).